The chain runs to 100 residues: uncharacterized protein (100 aa).

Its subcellular location is the cytoplasm. It is found in the endoplasmic reticulum. This is an uncharacterized protein from Schizosaccharomyces pombe (strain 972 / ATCC 24843) (Fission yeast).